We begin with the raw amino-acid sequence, 46 residues long: Large ribosomal subunit protein bL34 (46 aa).

The tract at residues 25 to 46 (TASGRQVLRRRRAKGRYRLAVS) is disordered. The span at 31-46 (VLRRRRAKGRYRLAVS) shows a compositional bias: basic residues.

The protein belongs to the bacterial ribosomal protein bL34 family.

This chain is Large ribosomal subunit protein bL34, found in Synechococcus sp. (strain JA-3-3Ab) (Cyanobacteria bacterium Yellowstone A-Prime).